The following is a 122-amino-acid chain: Large ribosomal subunit protein eL18 (122 aa).

This sequence belongs to the eukaryotic ribosomal protein eL18 family.

The protein is Large ribosomal subunit protein eL18 of Thermoplasma volcanium (strain ATCC 51530 / DSM 4299 / JCM 9571 / NBRC 15438 / GSS1).